The sequence spans 634 residues: DNA-directed RNA polymerase subunit gamma (634 aa).

Residues cysteine 74, cysteine 76, cysteine 89, and cysteine 92 each contribute to the Zn(2+) site. Aspartate 471, aspartate 473, and aspartate 475 together coordinate Mg(2+).

It belongs to the RNA polymerase beta' chain family. RpoC1 subfamily. As to quaternary structure, in cyanobacteria the RNAP catalytic core is composed of 2 alpha, 1 beta, 1 beta', 1 gamma and 1 omega subunit. When a sigma factor is associated with the core the holoenzyme is formed, which can initiate transcription. The cofactor is Mg(2+). Requires Zn(2+) as cofactor.

The enzyme catalyses RNA(n) + a ribonucleoside 5'-triphosphate = RNA(n+1) + diphosphate. In terms of biological role, DNA-dependent RNA polymerase catalyzes the transcription of DNA into RNA using the four ribonucleoside triphosphates as substrates. The sequence is that of DNA-directed RNA polymerase subunit gamma from Synechococcus sp. (strain CC9902).